Reading from the N-terminus, the 269-residue chain is UPF0761 membrane protein NTHI0384 (269 aa).

Helical transmembrane passes span 32 to 52, 89 to 109, 128 to 148, 168 to 188, 203 to 223, and 232 to 252; these read MLAI…FPVF, MSAV…NNID, FAIY…SIGI, LLSF…YTVV, FLAA…VVTF, and AMAT…VVLV.

The protein belongs to the UPF0761 family.

The protein localises to the cell inner membrane. This is UPF0761 membrane protein NTHI0384 from Haemophilus influenzae (strain 86-028NP).